The sequence spans 137 residues: Sch210972 biosynthesis cluster protein E (137 aa).

A compositionally biased stretch (polar residues) spans 1-12; the sequence is MTKYTSVNSSLP. The segment at 1 to 137 is disordered; sequence MTKYTSVNSS…ASTIRPPCCG (137 aa). The span at 15-27 shows a compositional bias: low complexity; that stretch reads PRQTTPTRPATQT. A compositionally biased stretch (polar residues) spans 51–71; it reads GSLNGSPTLRTTLDTSLSGTR. The segment covering 94-109 has biased composition (basic and acidic residues); sequence DEDHPHDPGPDSDAKK.

Its pathway is secondary metabolite biosynthesis. Functionally, part of the gene cluster that mediates the biosynthesis of the tetramic acid Sch210972, a potential anti-HIV fungal natural product that contains a decalin core. The PKS module of cghG together with the enoylreductase cghC catalyze the formation of the polyketide unit which is then conjugated to 4-hydroxyl-4-methyl glutamate (HMG) by the condensation domain of the cghG NRPS module. One unique structural feature of Sch210972 is the tetramic acid motif proposed to be derived from the non-proteinogenic amino acid HMG, by a Dieckmann-type condensation catalyzed by the reductase domain of cghG. The aldolase cghB catalyzes the aldol condensation of 2 molecules of pyruvic acid to yield the intermediate 4-hydroxyl-4-methyl-2-oxoglutarate (HMOG), which can then be stereoselectively transaminated by an unidentified enzyme to form HMG. The Diels-Alderase cghA then uses the Dieckmann product released by cghG as substrate and catalyzes the Diels-Alder cycloaddition to form the decalin ring of Sch210972. CghA also suppresses the nonenzymatic formation of the alternative stereoisomer. The sequence is that of Sch210972 biosynthesis cluster protein E from Chaetomium globosum (strain ATCC 6205 / CBS 148.51 / DSM 1962 / NBRC 6347 / NRRL 1970) (Soil fungus).